The primary structure comprises 425 residues: Transmembrane protein 184A (425 aa).

7 consecutive transmembrane segments (helical) span residues 51–71, 96–116, 133–153, 189–209, 226–246, 261–281, and 303–323; these read LFLT…TALL, LLFI…LLGG, FVIY…SAIM, TLQF…LQAF, VTLV…LFYF, FLTI…LAIL, and LAAG…SLAL. A disordered region spans residues 375-425; sequence QYTQQSTHEAPGPGQGGHPSPSTHPGPASGSGGGKKSRNIEKRMLIPSEDL. Over residues 392-402 the composition is skewed to low complexity; it reads HPSPSTHPGPA.

This sequence belongs to the TMEM184 family. Expressed in vascular cells (at protein level).

Its subcellular location is the cell membrane. The protein resides in the cytoplasm. The protein localises to the perinuclear region. It is found in the early endosome membrane. It localises to the endosome. Its subcellular location is the cytoplasmic vesicle. The protein resides in the secretory vesicle membrane. The protein localises to the cytoplasmic vesicle membrane. Functionally, acts as a heparin receptor in vascular cells. May be involved in vesicle transport in exocrine cells and Sertoli cells. The polypeptide is Transmembrane protein 184A (Tmem184a) (Rattus norvegicus (Rat)).